The primary structure comprises 157 residues: 2-C-methyl-D-erythritol 2,4-cyclodiphosphate synthase (157 aa).

Positions 8 and 10 each coordinate a divalent metal cation. 4-CDP-2-C-methyl-D-erythritol 2-phosphate is bound by residues 8–10 (DVH) and 34–35 (HS). Residue histidine 42 participates in a divalent metal cation binding. 4-CDP-2-C-methyl-D-erythritol 2-phosphate contacts are provided by residues 56-58 (DIG), 61-65 (FPDTD), 100-106 (AQAPKMA), 132-135 (TTTE), phenylalanine 139, and arginine 142.

The protein belongs to the IspF family. Homotrimer. A divalent metal cation serves as cofactor.

The enzyme catalyses 4-CDP-2-C-methyl-D-erythritol 2-phosphate = 2-C-methyl-D-erythritol 2,4-cyclic diphosphate + CMP. It participates in isoprenoid biosynthesis; isopentenyl diphosphate biosynthesis via DXP pathway; isopentenyl diphosphate from 1-deoxy-D-xylulose 5-phosphate: step 4/6. In terms of biological role, involved in the biosynthesis of isopentenyl diphosphate (IPP) and dimethylallyl diphosphate (DMAPP), two major building blocks of isoprenoid compounds. Catalyzes the conversion of 4-diphosphocytidyl-2-C-methyl-D-erythritol 2-phosphate (CDP-ME2P) to 2-C-methyl-D-erythritol 2,4-cyclodiphosphate (ME-CPP) with a corresponding release of cytidine 5-monophosphate (CMP). The polypeptide is 2-C-methyl-D-erythritol 2,4-cyclodiphosphate synthase (Pseudomonas fluorescens (strain SBW25)).